The following is a 186-amino-acid chain: Lactoylglutathione lyase (186 aa).

One can recognise a VOC domain in the interval 28-175 (FMQQTMFRIK…DGYWIELFDR (148 aa)). The substrate site is built by glutamine 31 and arginine 35. A Zn(2+)-binding site is contributed by glutamine 31. Residue glutamate 97 participates in Zn(2+) binding. Residues asparagine 101, arginine 121, histidine 125, and 155 to 156 (KM) each bind substrate. Histidine 125 lines the Zn(2+) pocket. Zn(2+) is bound at residue glutamate 171. Glutamate 171 acts as the Proton donor/acceptor in catalysis.

It belongs to the glyoxalase I family. Zn(2+) serves as cofactor.

The catalysed reaction is (R)-S-lactoylglutathione = methylglyoxal + glutathione. The protein operates within secondary metabolite metabolism; methylglyoxal degradation; (R)-lactate from methylglyoxal: step 1/2. Its function is as follows. Catalyzes the conversion of hemimercaptal, formed from methylglyoxal and glutathione, to S-lactoylglutathione. In Cicer arietinum (Chickpea), this protein is Lactoylglutathione lyase.